A 244-amino-acid chain; its full sequence is Small ribosomal subunit protein eS4 (244 aa).

Positions 43 to 108 (LPLLLIVRDI…NYRVLFDRKG (66 aa)) constitute an S4 RNA-binding domain.

Belongs to the eukaryotic ribosomal protein eS4 family.

This is Small ribosomal subunit protein eS4 (rps4e) from Methanocaldococcus jannaschii (strain ATCC 43067 / DSM 2661 / JAL-1 / JCM 10045 / NBRC 100440) (Methanococcus jannaschii).